The chain runs to 109 residues: Putative small proline-rich protein 2J (109 aa).

Repeat copies occupy residues 21 to 29 (RSAQSPVLC), 30 to 38 (QSAPSLVLL), 39 to 47 (QSAQSPIHC), 48 to 56 (QSALSHAHL), and 57 to 65 (SHASRNALL). A 5 X 9 AA approximate tandem repeats region spans residues 21 to 65 (RSAQSPVLCQSAPSLVLLQSAQSPIHCQSALSHAHLSHASRNALL). Positions 76–109 (AHPRANKGFSSLQNQKKRTESILHKSIATPPSSI) are disordered.

The protein belongs to the cornifin (SPRR) family. In terms of tissue distribution, not expressed in uterus.

It localises to the cytoplasm. Functionally, cross-linked envelope protein of keratinocytes. It is a keratinocyte protein that first appears in the cell cytosol, but ultimately becomes cross-linked to membrane proteins by transglutaminase. All that results in the formation of an insoluble envelope beneath the plasma membrane. This Mus musculus (Mouse) protein is Putative small proline-rich protein 2J (Sprr2j).